The following is a 316-amino-acid chain: Thymidylate synthase (316 aa).

DUMP is bound by residues Arg23 and 178–179; that span reads RR. The active-site Nucleophile is the Cys198. DUMP-binding positions include 218 to 221, Asn229, and 259 to 261; these read RSAD and HLY. Residue Asp221 participates in (6R)-5,10-methylene-5,6,7,8-tetrahydrofolate binding. Ala315 serves as a coordination point for (6R)-5,10-methylene-5,6,7,8-tetrahydrofolate.

It belongs to the thymidylate synthase family. Bacterial-type ThyA subfamily. In terms of assembly, homodimer.

It localises to the cytoplasm. The catalysed reaction is dUMP + (6R)-5,10-methylene-5,6,7,8-tetrahydrofolate = 7,8-dihydrofolate + dTMP. The protein operates within pyrimidine metabolism; dTTP biosynthesis. Its function is as follows. Catalyzes the reductive methylation of 2'-deoxyuridine-5'-monophosphate (dUMP) to 2'-deoxythymidine-5'-monophosphate (dTMP) while utilizing 5,10-methylenetetrahydrofolate (mTHF) as the methyl donor and reductant in the reaction, yielding dihydrofolate (DHF) as a by-product. This enzymatic reaction provides an intracellular de novo source of dTMP, an essential precursor for DNA biosynthesis. This is Thymidylate synthase from Lacticaseibacillus paracasei (strain ATCC 334 / BCRC 17002 / CCUG 31169 / CIP 107868 / KCTC 3260 / NRRL B-441) (Lactobacillus paracasei).